We begin with the raw amino-acid sequence, 308 residues long: Taste receptor type 2 member 46 (308 aa).

Met1 is a topological domain (extracellular). A helical transmembrane segment spans residues 2–22; sequence ITFLSITFSILVGVIFVIGNF. Over 23–46 the chain is Cytoplasmic; it reads ANGFIALVNSIEWVKRQKISFADQ. Residues 47–67 traverse the membrane as a helical segment; that stretch reads ILTGLAVSRVGLLWVLLLHLY. At 68-86 the chain is on the extracellular side; it reads ATEFNLAFYSVEVRITAYN. Residues 87–107 traverse the membrane as a helical segment; that stretch reads VWIVTNHFSNWLSTSLSMFYL. At 108–126 the chain is on the cytoplasmic side; sequence LKIATFSNLIFLHLKRKVK. Residues 127-147 form a helical membrane-spanning segment; sequence SVILVTLLGPLLFLVCHLFVM. Over 148–178 the chain is Extracellular; that stretch reads NMNHIVWRKEYEGNITWRIKLRSAMYLSNVT. Asn161 and Asn176 each carry an N-linked (GlcNAc...) asparagine glycan. Residues 179–199 traverse the membrane as a helical segment; the sequence is VTMLANLIPLTLTLMSFLLLI. The Cytoplasmic portion of the chain corresponds to 200–229; sequence CSLCKHLKKMQVHGKGSQDPSTKVHIKALQ. The chain crosses the membrane as a helical span at residues 230–250; it reads TVTSFLLLCAIYFLSMILSVW. Residues 251 to 258 lie on the Extracellular side of the membrane; the sequence is NFELEKKP. Residues 259-279 traverse the membrane as a helical segment; the sequence is VFMFCQAVIFSYPSTHPLILI. At 280–308 the chain is on the cytoplasmic side; that stretch reads WGNKKLKQIFLSVLWNVRYWVKGQKPSSP.

This sequence belongs to the G-protein coupled receptor T2R family.

The protein localises to the membrane. It is found in the cell projection. The protein resides in the cilium membrane. In terms of biological role, receptor that may play a role in the perception of bitterness and is gustducin-linked. May play a role in sensing the chemical composition of the gastrointestinal content. The activity of this receptor may stimulate alpha gustducin, mediate PLC-beta-2 activation and lead to the gating of TRPM5. In airway epithelial cells, binding of bitter compounds increases the intracellular calcium ion concentration and stimulates ciliary beat frequency. The sequence is that of Taste receptor type 2 member 46 (TAS2R46) from Macaca mulatta (Rhesus macaque).